We begin with the raw amino-acid sequence, 259 residues long: MRKLWFLPILLGAVGGVSLYAIAQQENPAEEVKKQKELLLKEMGILPGDVYAEQGRDMFNKPMGNAGKSCSSCHGQDGRYLRGAYAHMPRYYKDMDAVADLDTRIKYCMEKYMGVGNVKHDLNFKSIATYVATLSNGMKMDVKLTHPKEREMYEKGRELWYARVGKMDFSCAICHDTFGGQRIRLQTLAKVKEDKVATHWPAYRFSNDQLWTMEDRIRGCYNQIRVTPPPHFSWPQIALSLYMAYESKGGTIETPGFVR.

An N-terminal signal peptide occupies residues M1–A23. Positions V50–S135 constitute a Cytochrome c domain. Positions 70, 73, 74, 108, 171, 174, and 175 each coordinate heme c. R216 serves as a coordination point for substrate. C220 contributes to the heme c binding site. The active-site Cysteine persulfide intermediate is C220.

This sequence belongs to the SoxA family. Heterodimer of SoxA and SoxX. Heme c is required as a cofactor. In terms of processing, cysteine persulfide at Cys-220.

The protein localises to the periplasm. It catalyses the reaction L-cysteinyl-[SoxY protein] + thiosulfate + 2 Fe(III)-[cytochrome c] = S-sulfosulfanyl-L-cysteinyl-[SoxY protein] + 2 Fe(II)-[cytochrome c] + 2 H(+). It carries out the reaction S-sulfanyl-L-cysteinyl-[SoxY protein] + thiosulfate + 2 Fe(III)-[cytochrome c] = S-(2-sulfodisulfanyl)-L-cysteinyl-[SoxY protein] + 2 Fe(II)-[cytochrome c] + 2 H(+). Functionally, C-type diheme cytochrome, which is part of the SoxAX cytochrome complex involved in sulfur oxidation. The SoxAX complex catalyzes the formation of a heterodisulfide bond between the conserved cysteine residue on a sulfur carrier SoxYZ complex subunit SoxY and thiosulfate or other inorganic sulfur substrates. This leads to the liberation of two electrons, which may be transferred from the SoxAX complex to another cytochrome c that then channels them into the respiratory electron transport chain. Some electrons may be used for reductive CO(2) fixation. This Hydrogenobacter thermophilus (strain DSM 6534 / IAM 12695 / TK-6) protein is L-cysteine S-thiosulfotransferase subunit SoxA.